Reading from the N-terminus, the 1877-residue chain is Transmembrane protein 131 (1877 aa).

The N-terminal stretch at 1–20 is a signal peptide; that stretch reads MGKRAGGAAAAAAAASTSSA. Residues 21-1115 are Lumenal-facing; sequence AGLEPAAGRG…AEALPRPNWE (1095 aa). Positions 107 to 281 are papD-L domain; it reads RFEPPMLDFH…ETKGVMRASF (175 aa). The helical transmembrane segment at 1116-1136 threads the bilayer; the sequence is LALYIIISGVMSALFLLVIGT. At 1137–1877 the chain is on the cytoplasmic side; it reads AYLEAQGIWE…WSNSHFPHEN (741 aa). Over residues 1197 to 1227 the composition is skewed to polar residues; it reads NASSRPGTGSHRQCGTSVHPHSSHGSKNSAD. 4 disordered regions span residues 1197–1573, 1590–1655, 1679–1707, and 1830–1852; these read NASS…SSST, LKQR…NPTF, SDFS…SPVS, and NSAA…TYNP. Residues 1233-1258 are compositionally biased toward low complexity; sequence TRNSSSMSSRTSPQAAASQSTSKTSP. Residues 1301 to 1311 are compositionally biased toward pro residues; that stretch reads QPPPPVPQHQE. Phosphoserine is present on residues serine 1318 and serine 1338. Composition is skewed to basic and acidic residues over residues 1326–1339 and 1349–1360; these read SHPE…HSSE and AMDKDFDHHDSS. Phosphoserine is present on serine 1371. Residues 1376–1391 show a composition bias toward basic residues; sequence SKGKGKSLQQRKAKPP. Residues 1392-1414 show a composition bias toward basic and acidic residues; that stretch reads KKQEEKEKRGKGKPQEDELKDAL. Over residues 1420–1432 the composition is skewed to low complexity; it reads SSTTTETSNPDTE. Polar residues-rich tracts occupy residues 1507–1523 and 1538–1550; these read TLAS…TKGT and LPSS…TSSS. The span at 1599–1608 shows a compositional bias: pro residues; it reads PASPSLPTAP. Positions 1609–1646 are enriched in low complexity; the sequence is CPFTSRGSYSSVVNSSGSDTKAKQTSSSKSKLTKAASL. Residues 1830–1839 are compositionally biased toward polar residues; sequence NSAAAHTPSA. A phosphoserine mark is found at serine 1857 and serine 1865.

The protein belongs to the TMEM131 family. Interacts (via PapD-L domain) with COL1A2 (via C-terminus); the interaction is direct, may occur with other collagen proteins, and is involved in assembly and TRAPPIII ER-to-Golgi transport complex-dependent secretion of collagen. Interacts (via C-terminus) with TRAPPC8 (via C-terminus); the interaction is direct.

Its subcellular location is the membrane. In terms of biological role, collagen binding transmembrane protein involved in collagen secretion by recruiting the ER-to-Golgi transport complex TRAPPIII. May play a role in the immune response to viral infection. The protein is Transmembrane protein 131 of Mus musculus (Mouse).